A 482-amino-acid polypeptide reads, in one-letter code: Anthranilate synthase component 1 (482 aa).

Residues serine 47 and 267 to 269 each bind L-tryptophan; that span reads PYM. Chorismate is bound at residue 302-303; that stretch reads GT. Glutamate 329 lines the Mg(2+) pocket. Chorismate-binding positions include tyrosine 417, arginine 437, 451–453, and glycine 453; that span reads GGG. Glutamate 466 is a binding site for Mg(2+).

Belongs to the anthranilate synthase component I family. Heterotetramer consisting of two non-identical subunits: a beta subunit (TrpG) and a large alpha subunit (TrpE). It depends on Mg(2+) as a cofactor.

It carries out the reaction chorismate + L-glutamine = anthranilate + pyruvate + L-glutamate + H(+). The protein operates within amino-acid biosynthesis; L-tryptophan biosynthesis; L-tryptophan from chorismate: step 1/5. With respect to regulation, feedback inhibited by tryptophan. Part of a heterotetrameric complex that catalyzes the two-step biosynthesis of anthranilate, an intermediate in the biosynthesis of L-tryptophan. In the first step, the glutamine-binding beta subunit (TrpG) of anthranilate synthase (AS) provides the glutamine amidotransferase activity which generates ammonia as a substrate that, along with chorismate, is used in the second step, catalyzed by the large alpha subunit of AS (TrpE) to produce anthranilate. In the absence of TrpG, TrpE can synthesize anthranilate directly from chorismate and high concentrations of ammonia. The sequence is that of Anthranilate synthase component 1 (trpE) from Spirochaeta aurantia.